The following is a 212-amino-acid chain: Protein HP-25 homolog 1 (212 aa).

A signal peptide spans M1–A34. A disordered region spans residues S36 to P66. The segment covering G40–L53 has biased composition (low complexity). Residues G40–G76 enclose the Collagen-like domain. Residues P82–N212 enclose the C1q domain. N125 is a glycosylation site (N-linked (GlcNAc...) asparagine).

The protein resides in the secreted. The chain is Protein HP-25 homolog 1 from Bos taurus (Bovine).